The chain runs to 266 residues: ATP synthase subunit a (266 aa).

Helical transmembrane passes span 38-58, 99-119, 126-146, 162-182, 191-211, and 224-244; these read KQMLLVLLSVVFIAVFFVLAA, LLFSLFFFILVNNIYGAIPLI, HVGGAYVLAGIVYFTWIAIGI, GVPWFILPIVIPIEIISNFVV, LFATMLAGHLIVMIAGSGIEY, and SVLVLAGAIAMYMLEALIMVL.

The protein belongs to the ATPase A chain family. In terms of assembly, F-type ATPases have 2 components, CF(1) - the catalytic core - and CF(0) - the membrane proton channel. CF(1) has five subunits: alpha(3), beta(3), gamma(1), delta(1), epsilon(1). CF(0) has three main subunits: a(1), b(2) and c(9-12). The alpha and beta chains form an alternating ring which encloses part of the gamma chain. CF(1) is attached to CF(0) by a central stalk formed by the gamma and epsilon chains, while a peripheral stalk is formed by the delta and b chains.

It localises to the cell membrane. Key component of the proton channel; it plays a direct role in the translocation of protons across the membrane. The polypeptide is ATP synthase subunit a (Pseudarthrobacter chlorophenolicus (strain ATCC 700700 / DSM 12829 / CIP 107037 / JCM 12360 / KCTC 9906 / NCIMB 13794 / A6) (Arthrobacter chlorophenolicus)).